A 343-amino-acid chain; its full sequence is Programmed cell death protein 2 (343 aa).

Zn(2+) contacts are provided by Cys-134, Cys-137, Cys-145, Cys-148, Cys-154, His-158, His-167, and Cys-171. An MYND-type; atypical zinc finger spans residues 134–171 (CRVCGCLAPMTCSRCKQAHYCSKEHQTLDWRLGHKQAC).

Post-translationally, ubiquitinated by PRKN, promoting proteasomal degradation.

It localises to the nucleus. Its function is as follows. May be a DNA-binding protein with a regulatory function. May play an important role in cell death and/or in regulation of cell proliferation. The chain is Programmed cell death protein 2 (Pdcd2) from Mus musculus (Mouse).